The following is a 336-amino-acid chain: tRNA N6-adenosine threonylcarbamoyltransferase (336 aa).

The Fe cation site is built by His-111 and His-115. Substrate contacts are provided by residues Leu-134–Gly-138, Asp-167, Gly-180, and Asn-270. Residue Asp-298 participates in Fe cation binding.

This sequence belongs to the KAE1 / TsaD family. Fe(2+) serves as cofactor.

It localises to the cytoplasm. The enzyme catalyses L-threonylcarbamoyladenylate + adenosine(37) in tRNA = N(6)-L-threonylcarbamoyladenosine(37) in tRNA + AMP + H(+). Required for the formation of a threonylcarbamoyl group on adenosine at position 37 (t(6)A37) in tRNAs that read codons beginning with adenine. Is involved in the transfer of the threonylcarbamoyl moiety of threonylcarbamoyl-AMP (TC-AMP) to the N6 group of A37, together with TsaE and TsaB. TsaD likely plays a direct catalytic role in this reaction. The polypeptide is tRNA N6-adenosine threonylcarbamoyltransferase (Acinetobacter baumannii (strain SDF)).